Consider the following 462-residue polypeptide: tRNA modification GTPase MnmE (462 aa).

(6S)-5-formyl-5,6,7,8-tetrahydrofolate is bound by residues Arg-22, Glu-87, and Arg-126. The region spanning 220-382 (GLKVAIVGRP…LARKVQEIVL (163 aa)) is the TrmE-type G domain. Asn-230 contributes to the K(+) binding site. GTP is bound by residues 230-235 (NVGKSS), 249-255 (SNIPGTT), and 274-277 (DTAG). Ser-234 lines the Mg(2+) pocket. Ser-249, Ile-251, and Thr-254 together coordinate K(+). Mg(2+) is bound at residue Thr-255. Position 462 (Lys-462) interacts with (6S)-5-formyl-5,6,7,8-tetrahydrofolate.

This sequence belongs to the TRAFAC class TrmE-Era-EngA-EngB-Septin-like GTPase superfamily. TrmE GTPase family. Homodimer. Heterotetramer of two MnmE and two MnmG subunits. Requires K(+) as cofactor.

It localises to the cytoplasm. Its function is as follows. Exhibits a very high intrinsic GTPase hydrolysis rate. Involved in the addition of a carboxymethylaminomethyl (cmnm) group at the wobble position (U34) of certain tRNAs, forming tRNA-cmnm(5)s(2)U34. In Moorella thermoacetica (strain ATCC 39073 / JCM 9320), this protein is tRNA modification GTPase MnmE.